Here is a 177-residue protein sequence, read N- to C-terminus: GTP-dependent dephospho-CoA kinase (177 aa).

The GTP site is built by Asp48, Val49, Val50, Asp67, Lys69, Glu124, and Asp147.

It belongs to the GTP-dependent DPCK family.

The catalysed reaction is 3'-dephospho-CoA + GTP = GDP + CoA + H(+). It functions in the pathway cofactor biosynthesis; coenzyme A biosynthesis. Catalyzes the GTP-dependent phosphorylation of the 3'-hydroxyl group of dephosphocoenzyme A to form coenzyme A (CoA). The sequence is that of GTP-dependent dephospho-CoA kinase from Thermococcus onnurineus (strain NA1).